A 411-amino-acid chain; its full sequence is CinA-like protein (411 aa).

The protein belongs to the CinA family.

The protein is CinA-like protein of Dictyoglomus turgidum (strain DSM 6724 / Z-1310).